A 76-amino-acid polypeptide reads, in one-letter code: Cytochrome c oxidase subunit 6C (76 aa).

Topologically, residues 4–22 (GALLPKPQMRGLLAKRLRV) are mitochondrial matrix. A helical membrane pass occupies residues 23-44 (HIAGAFIVALGVAAAYKFGVAE). Topologically, residues 45-76 (PRKKAYAEFYRNYDSMKDFEEMRKAGIFQSAK) are mitochondrial intermembrane.

The protein belongs to the cytochrome c oxidase subunit 6c family. Component of the cytochrome c oxidase (complex IV, CIV), a multisubunit enzyme composed of 14 subunits. The complex is composed of a catalytic core of 3 subunits MT-CO1, MT-CO2 and MT-CO3, encoded in the mitochondrial DNA, and 11 supernumerary subunits COX4I, COX5A, COX5B, COX6A, COX6B, COX6C, COX7A, COX7B, COX7C, COX8 and NDUFA4, which are encoded in the nuclear genome. The complex exists as a monomer or a dimer and forms supercomplexes (SCs) in the inner mitochondrial membrane with NADH-ubiquinone oxidoreductase (complex I, CI) and ubiquinol-cytochrome c oxidoreductase (cytochrome b-c1 complex, complex III, CIII), resulting in different assemblies (supercomplex SCI(1)III(2)IV(1) and megacomplex MCI(2)III(2)IV(2)). Acetylation of Lys-61 is observed in liver mitochondria from fasted mice but not from fed mice.

The protein resides in the mitochondrion inner membrane. Its pathway is energy metabolism; oxidative phosphorylation. In terms of biological role, component of the cytochrome c oxidase, the last enzyme in the mitochondrial electron transport chain which drives oxidative phosphorylation. The respiratory chain contains 3 multisubunit complexes succinate dehydrogenase (complex II, CII), ubiquinol-cytochrome c oxidoreductase (cytochrome b-c1 complex, complex III, CIII) and cytochrome c oxidase (complex IV, CIV), that cooperate to transfer electrons derived from NADH and succinate to molecular oxygen, creating an electrochemical gradient over the inner membrane that drives transmembrane transport and the ATP synthase. Cytochrome c oxidase is the component of the respiratory chain that catalyzes the reduction of oxygen to water. Electrons originating from reduced cytochrome c in the intermembrane space (IMS) are transferred via the dinuclear copper A center (CU(A)) of subunit 2 and heme A of subunit 1 to the active site in subunit 1, a binuclear center (BNC) formed by heme A3 and copper B (CU(B)). The BNC reduces molecular oxygen to 2 water molecules using 4 electrons from cytochrome c in the IMS and 4 protons from the mitochondrial matrix. This Mus musculus (Mouse) protein is Cytochrome c oxidase subunit 6C (Cox6c).